A 373-amino-acid polypeptide reads, in one-letter code: Chaperone protein DnaJ (373 aa).

In terms of domain architecture, J spans 4–68 (NYYQILGVSK…QKRAAYDRLG (65 aa)). Residues 136 to 214 (GIEKNISFSS…CHGMGRYHKQ (79 aa)) form a CR-type zinc finger. C149, C152, C166, C169, C188, C191, C202, and C205 together coordinate Zn(2+). CXXCXGXG motif repeat units lie at residues 149-156 (CDTCHGSG), 166-173 (CDACSGVG), 188-195 (CHKCQGNG), and 202-209 (CKKCHGMG).

It belongs to the DnaJ family. Homodimer. Requires Zn(2+) as cofactor.

It localises to the cytoplasm. Its function is as follows. Participates actively in the response to hyperosmotic and heat shock by preventing the aggregation of stress-denatured proteins and by disaggregating proteins, also in an autonomous, DnaK-independent fashion. Unfolded proteins bind initially to DnaJ; upon interaction with the DnaJ-bound protein, DnaK hydrolyzes its bound ATP, resulting in the formation of a stable complex. GrpE releases ADP from DnaK; ATP binding to DnaK triggers the release of the substrate protein, thus completing the reaction cycle. Several rounds of ATP-dependent interactions between DnaJ, DnaK and GrpE are required for fully efficient folding. Also involved, together with DnaK and GrpE, in the DNA replication of plasmids through activation of initiation proteins. The protein is Chaperone protein DnaJ of Rickettsia africae (strain ESF-5).